The chain runs to 300 residues: 33 kDa chaperonin (300 aa).

Intrachain disulfides connect cysteine 247/cysteine 249 and cysteine 280/cysteine 283.

Belongs to the HSP33 family. In terms of processing, under oxidizing conditions two disulfide bonds are formed involving the reactive cysteines. Under reducing conditions zinc is bound to the reactive cysteines and the protein is inactive.

The protein resides in the cytoplasm. Its function is as follows. Redox regulated molecular chaperone. Protects both thermally unfolding and oxidatively damaged proteins from irreversible aggregation. Plays an important role in the bacterial defense system toward oxidative stress. This Prochlorococcus marinus (strain MIT 9312) protein is 33 kDa chaperonin.